The chain runs to 269 residues: 5'-nucleotidase SurE (269 aa).

Residues Asp-11, Asp-12, Ser-43, and Asn-101 each contribute to the a divalent metal cation site.

Belongs to the SurE nucleotidase family. The cofactor is a divalent metal cation.

Its subcellular location is the cytoplasm. It catalyses the reaction a ribonucleoside 5'-phosphate + H2O = a ribonucleoside + phosphate. Nucleotidase that shows phosphatase activity on nucleoside 5'-monophosphates. This is 5'-nucleotidase SurE from Prochlorococcus marinus (strain MIT 9313).